The chain runs to 381 residues: Carbamoyl phosphate synthase small chain (381 aa).

Residues 1–192 (MSKPAILALE…SGYADVSQGD (192 aa)) form a CPSase region. L-glutamine contacts are provided by Ser-47, Gly-244, and Gly-246. The region spanning 196–381 (HVVAYDYGMK…RFVEMMRHRR (186 aa)) is the Glutamine amidotransferase type-1 domain. Residue Cys-272 is the Nucleophile of the active site. L-glutamine contacts are provided by Leu-273, Gln-276, Asn-314, Gly-316, and Phe-317. Active-site residues include His-356 and Glu-358.

The protein belongs to the CarA family. As to quaternary structure, composed of two chains; the small (or glutamine) chain promotes the hydrolysis of glutamine to ammonia, which is used by the large (or ammonia) chain to synthesize carbamoyl phosphate. Tetramer of heterodimers (alpha,beta)4.

The catalysed reaction is hydrogencarbonate + L-glutamine + 2 ATP + H2O = carbamoyl phosphate + L-glutamate + 2 ADP + phosphate + 2 H(+). The enzyme catalyses L-glutamine + H2O = L-glutamate + NH4(+). It participates in amino-acid biosynthesis; L-arginine biosynthesis; carbamoyl phosphate from bicarbonate: step 1/1. It functions in the pathway pyrimidine metabolism; UMP biosynthesis via de novo pathway; (S)-dihydroorotate from bicarbonate: step 1/3. In terms of biological role, small subunit of the glutamine-dependent carbamoyl phosphate synthetase (CPSase). CPSase catalyzes the formation of carbamoyl phosphate from the ammonia moiety of glutamine, carbonate, and phosphate donated by ATP, constituting the first step of 2 biosynthetic pathways, one leading to arginine and/or urea and the other to pyrimidine nucleotides. The small subunit (glutamine amidotransferase) binds and cleaves glutamine to supply the large subunit with the substrate ammonia. The chain is Carbamoyl phosphate synthase small chain from Halomonas eurihalina.